The following is a 309-amino-acid chain: Low-density lipoprotein receptor-related protein 1 (309 aa).

It belongs to the LDLR family.

The protein resides in the endoplasmic reticulum. Its subcellular location is the golgi apparatus. It is found in the endosome. Its function is as follows. Involved in endocytosis, fatty acid beta-oxidation and infectious growth. Plays a critical role in the accumulation of MSN2 from the cytosol to the nucleus by activating the cyclic AMP signaling pathway. MSN2 can then target the dienoyl-coenzyme A isomerase DCI1 and other genes involved in fatty acid beta-oxidation, which is important for lipid droplets degradation and infectious growth. In Pyricularia oryzae (strain 70-15 / ATCC MYA-4617 / FGSC 8958) (Rice blast fungus), this protein is Low-density lipoprotein receptor-related protein 1.